The chain runs to 89 residues: MALTVEQKAQIVKDFQRKEGDTGSSEVQVALLTFRINDLTPHFKANPKDHHSRRGLLKMVSQRRRLLAYLRRTQPDTYRALITRLGLRK.

This sequence belongs to the universal ribosomal protein uS15 family. In terms of assembly, part of the 30S ribosomal subunit. Forms a bridge to the 50S subunit in the 70S ribosome, contacting the 23S rRNA.

Its function is as follows. One of the primary rRNA binding proteins, it binds directly to 16S rRNA where it helps nucleate assembly of the platform of the 30S subunit by binding and bridging several RNA helices of the 16S rRNA. Functionally, forms an intersubunit bridge (bridge B4) with the 23S rRNA of the 50S subunit in the ribosome. This Neisseria gonorrhoeae (strain ATCC 700825 / FA 1090) protein is Small ribosomal subunit protein uS15.